Reading from the N-terminus, the 127-residue chain is Major sperm protein 55/57 (127 aa).

A2 carries the N-acetylalanine modification. An MSP domain is found at 9 to 126; it reads DIQTQPGTKI…RRKNLPIEYN (118 aa).

In terms of tissue distribution, sperm.

Its subcellular location is the cell projection. The protein localises to the pseudopodium. It localises to the cytoplasm. It is found in the cytoskeleton. Its function is as follows. Central component in molecular interactions underlying sperm crawling. Forms an extensive filament system that extends from sperm villipoda, along the leading edge of the pseudopod. The sequence is that of Major sperm protein 55/57 (msp-55) from Caenorhabditis elegans.